A 709-amino-acid chain; its full sequence is MATCAEILRSEFPEIDGQVFDYVTGVLHSGSADFESVDDLVEAVGELLQEVSGDSKDDAGIRAVCQRMYNTLRLAEPQSQGNSQVLLDAPIQLSKITENYDCGTKLPGLLKREQSSTVNAKKLEKAEARLKAKQEKRSEKDTLKTSNPLVLEEASASQAGSRKESRLESSGKNKSYDVRIENFDVSFGDRVLLAGADVNLAWGRRYGLVGRNGLGKTTLLKMLATRSLRVPAHISLLHVEQEVAGDDTPALQSVLESDSVREDLLRRERELTAQIAAGRAEGSEAAELAEIYAKLEEIEADKAPARASVILAGLGFTPKMQQQPTREFSGGWRMRLALARALFARPDLLLLDEPTNMLDVRAILWLENYLQTWPSTILVVSHDRNFLNAIATDIIHLHSQRLDGYRGDFETFIKSKQERLLNQQREYEAQQQYRQHIQVFIDRFRYNANRASQVQSKLKMLEKLPELKPVDKESEVVMKFPDGFEKFSPPILQLDEVDFYYDPKHVIFSRLSVSADLESRICVVGENGAGKSTMLKLLLGDLAPVRGIRHAHRNLKIGYFSQHHVEQLDLNVSAVELLARKFPGRPEEEYRHQLGRYGISGELAMRPLASLSGGQKSRVAFAQMTMPCPNFYILDEPTNHLDMETIEALGRALNNFRGGVILVSHDERFIRLVCRELWVCEGGGVTRVEGGFDQYRALLQEQFRREGFL.

An N-acetylalanine modification is found at A2. The residue at position 83 (S83) is a Phosphoserine. Residues R129–L143 are compositionally biased toward basic and acidic residues. Positions R129–G171 are disordered. Phosphoserine is present on residues S155, S157, and S161. Basic and acidic residues predominate over residues S161 to G171. 2 consecutive ABC transporter domains span residues V178–Q424 and L492–G707. G210–T217 is a binding site for ATP. S283 is modified (phosphoserine). Residue G525–S532 coordinates ATP.

Belongs to the ABC transporter superfamily. ABCF family. EF3 subfamily.

Functionally, displays an antiviral effect against flaviviruses such as west Nile virus (WNV) in the presence of OAS1B. This Homo sapiens (Human) protein is ATP-binding cassette sub-family F member 3 (ABCF3).